Consider the following 316-residue polypeptide: Ribosomal RNA small subunit methyltransferase H (316 aa).

Residues 35–37, D55, F84, D105, and Q112 each bind S-adenosyl-L-methionine; that span reads AGH.

This sequence belongs to the methyltransferase superfamily. RsmH family.

Its subcellular location is the cytoplasm. The enzyme catalyses cytidine(1402) in 16S rRNA + S-adenosyl-L-methionine = N(4)-methylcytidine(1402) in 16S rRNA + S-adenosyl-L-homocysteine + H(+). Functionally, specifically methylates the N4 position of cytidine in position 1402 (C1402) of 16S rRNA. This is Ribosomal RNA small subunit methyltransferase H from Streptococcus sanguinis (strain SK36).